The following is a 165-amino-acid chain: Sporulation thiol-disulfide oxidoreductase A (165 aa).

Residues 1 to 26 (MLTKRLLTIYIMLLGLIAWFPGAAQA) form the signal peptide. Residues 27 to 165 (EEKQPAVPAV…AEQLKEWTEE (139 aa)) form the Thioredoxin domain. The cysteines at positions 65 and 68 are disulfide-linked.

This sequence belongs to the thioredoxin family.

The protein localises to the spore outer membrane. Thiol-disulfide oxidoreductase with a reductive function, involved in spore cortex synthesis. It could be involved either in breaking disulfide bonds in cortex components or in proteins that are important for cortex synthesis, or in thiol/disulfide bond interchange. The polypeptide is Sporulation thiol-disulfide oxidoreductase A (stoA) (Bacillus subtilis (strain 168)).